Here is a 149-residue protein sequence, read N- to C-terminus: Large ribosomal subunit protein bL9 (149 aa).

It belongs to the bacterial ribosomal protein bL9 family.

Its function is as follows. Binds to the 23S rRNA. This is Large ribosomal subunit protein bL9 from Thermotoga sp. (strain RQ2).